The sequence spans 875 residues: Protein HIR2 (875 aa).

WD repeat units lie at residues 10 to 47 (IHNE…DTAF), 118 to 158 (KSPS…KLSE), 163 to 201 (KASK…THKL), 237 to 277 (PNNA…PAFY), 278 to 316 (EKPN…PLFN), and 320 to 359 (VSST…LGVA). The disordered stretch occupies residues 398–473 (ESASAAPIPN…IAPGSKKQKK (76 aa)). Positions 424 to 446 (ANNQTNGIKTIQSTSMEFNTPSY) are enriched in polar residues. WD repeat units lie at residues 546 to 587 (LFQD…LMAP) and 589 to 626 (VLGV…LAFP). Residue Ser-713 is modified to Phosphoserine.

Belongs to the WD repeat HIR1 family. As to quaternary structure, component of the HIR complex, composed of HIR1, HIR2, HIR3 and HPC2. This complex may consist of one copy of HIR1 and HIR3 and two copies of HIR2 and HPC2. The HIR complex interacts with ASF1. Interacts with SNF2. Interacts with SNF5. Interacts with SWI3. Interacts with RTT106.

It localises to the nucleus. It is found in the chromosome. Functionally, component of the HIR complex, which cooperates with ASF1 to promote replication-independent chromatin assembly. The HIR complex is also required for the periodic repression of three of the four histone gene loci during the cell cycle as well as for autogenous regulation of the HTA1-HTB1 locus by H2A and H2B. DNA-binding by the HIR complex may repress transcription by inhibiting nucleosome remodeling by the SWI/SNF complex. The HIR complex may also be required for transcriptional silencing of centromeric, telomeric and mating-type loci in the absence of CAF-1. This Saccharomyces cerevisiae (strain ATCC 204508 / S288c) (Baker's yeast) protein is Protein HIR2 (HIR2).